A 475-amino-acid polypeptide reads, in one-letter code: Ribulose bisphosphate carboxylase large chain (475 aa).

A propeptide spanning residues 1 to 2 (MS) is cleaved from the precursor. P3 carries the post-translational modification N-acetylproline. K14 bears the N6,N6,N6-trimethyllysine mark. 2 residues coordinate substrate: N123 and T173. The Proton acceptor role is filled by K175. K177 contacts substrate. Mg(2+) is bound by residues K201, D203, and E204. N6-carboxylysine is present on K201. The Proton acceptor role is filled by H294. Positions 327 and 379 each coordinate substrate.

The protein belongs to the RuBisCO large chain family. Type I subfamily. Heterohexadecamer of 8 large chains and 8 small chains; disulfide-linked. The disulfide link is formed within the large subunit homodimers. Requires Mg(2+) as cofactor. Post-translationally, the disulfide bond which can form in the large chain dimeric partners within the hexadecamer appears to be associated with oxidative stress and protein turnover.

It is found in the plastid. Its subcellular location is the chloroplast. It carries out the reaction 2 (2R)-3-phosphoglycerate + 2 H(+) = D-ribulose 1,5-bisphosphate + CO2 + H2O. It catalyses the reaction D-ribulose 1,5-bisphosphate + O2 = 2-phosphoglycolate + (2R)-3-phosphoglycerate + 2 H(+). RuBisCO catalyzes two reactions: the carboxylation of D-ribulose 1,5-bisphosphate, the primary event in carbon dioxide fixation, as well as the oxidative fragmentation of the pentose substrate in the photorespiration process. Both reactions occur simultaneously and in competition at the same active site. The protein is Ribulose bisphosphate carboxylase large chain of Amaranthus hypochondriacus (Prince-of-Wales feather).